We begin with the raw amino-acid sequence, 198 residues long: Endothelin-3 (198 aa).

An N-terminal signal peptide occupies residues 1 to 16; sequence MEPGLWLLFGLTVTSA. Positions 17 to 86 are excised as a propeptide; the sequence is AGLVPCPQPG…SKGGPVHGRA (70 aa). The segment at 22–79 is disordered; that stretch reads CPQPGDAGKSGVPGTPPTARSEGDIQEPVAMTAVQGPSPRSPEQEQELGRFGEQASKG. Cystine bridges form between Cys-89-Cys-103 and Cys-91-Cys-99. A propeptide spanning residues 110-198 is cleaved from the precursor; that stretch reads INTPEQTVPY…RGNGGLRPTR (89 aa). The interval 150–164 is endothelin-like; that stretch reads CACVQSQDSACLHFC. A disordered region spans residues 174–198; sequence SRTATNPDKEEEPASRGNGGLRPTR.

Belongs to the endothelin/sarafotoxin family. In terms of tissue distribution, expressed in which included heart, lung, liver, kidney, spleen, stomach, pancreas, duodenum, colon, uterus, ovary and testis.

It is found in the secreted. In terms of biological role, endothelins are endothelium-derived vasoconstrictor peptides. The chain is Endothelin-3 (EDN3) from Canis lupus familiaris (Dog).